The primary structure comprises 113 residues: Protein PucD (113 aa).

Functionally, seems to be required for the LH-II stabilization. This is Protein PucD (pucD) from Rhodobacter capsulatus (Rhodopseudomonas capsulata).